The chain runs to 354 residues: Dual-specificity RNA methyltransferase RlmN (354 aa).

The active-site Proton acceptor is the E89. Positions 106–339 (KEAKYTVCVS…CTIRKSKGMD (234 aa)) constitute a Radical SAM core domain. Residues C113 and C344 are joined by a disulfide bond. The [4Fe-4S] cluster site is built by C120, C124, and C127. S-adenosyl-L-methionine contacts are provided by residues 170–171 (GE), S202, 225–227 (SLH), and N301. The active-site S-methylcysteine intermediate is C344.

It belongs to the radical SAM superfamily. RlmN family. The cofactor is [4Fe-4S] cluster.

It is found in the cytoplasm. The catalysed reaction is adenosine(2503) in 23S rRNA + 2 reduced [2Fe-2S]-[ferredoxin] + 2 S-adenosyl-L-methionine = 2-methyladenosine(2503) in 23S rRNA + 5'-deoxyadenosine + L-methionine + 2 oxidized [2Fe-2S]-[ferredoxin] + S-adenosyl-L-homocysteine. The enzyme catalyses adenosine(37) in tRNA + 2 reduced [2Fe-2S]-[ferredoxin] + 2 S-adenosyl-L-methionine = 2-methyladenosine(37) in tRNA + 5'-deoxyadenosine + L-methionine + 2 oxidized [2Fe-2S]-[ferredoxin] + S-adenosyl-L-homocysteine. Functionally, specifically methylates position 2 of adenine 2503 in 23S rRNA and position 2 of adenine 37 in tRNAs. m2A2503 modification seems to play a crucial role in the proofreading step occurring at the peptidyl transferase center and thus would serve to optimize ribosomal fidelity. This chain is Dual-specificity RNA methyltransferase RlmN, found in Nautilia profundicola (strain ATCC BAA-1463 / DSM 18972 / AmH).